A 185-amino-acid chain; its full sequence is Elongation factor P (185 aa).

Belongs to the elongation factor P family.

The protein localises to the cytoplasm. The protein operates within protein biosynthesis; polypeptide chain elongation. Functionally, involved in peptide bond synthesis. Stimulates efficient translation and peptide-bond synthesis on native or reconstituted 70S ribosomes in vitro. Probably functions indirectly by altering the affinity of the ribosome for aminoacyl-tRNA, thus increasing their reactivity as acceptors for peptidyl transferase. This Caldicellulosiruptor bescii (strain ATCC BAA-1888 / DSM 6725 / KCTC 15123 / Z-1320) (Anaerocellum thermophilum) protein is Elongation factor P.